A 360-amino-acid polypeptide reads, in one-letter code: Phospho-N-acetylmuramoyl-pentapeptide-transferase (360 aa).

Helical transmembrane passes span 27 to 47, 69 to 89, 93 to 113, 134 to 154, 168 to 188, 199 to 219, 239 to 259, 262 to 282, 288 to 308, and 337 to 357; these read GAFL…INVL, VGTP…STLM, WDNP…LIGF, LLLG…NHPA, VLLN…VGAA, GLAI…AYAV, ILIF…YNAP, AVFM…AIAI, LVLA…IIQV, and TIVI…LATL.

This sequence belongs to the glycosyltransferase 4 family. MraY subfamily. Requires Mg(2+) as cofactor.

It localises to the cell inner membrane. It carries out the reaction UDP-N-acetyl-alpha-D-muramoyl-L-alanyl-gamma-D-glutamyl-meso-2,6-diaminopimeloyl-D-alanyl-D-alanine + di-trans,octa-cis-undecaprenyl phosphate = di-trans,octa-cis-undecaprenyl diphospho-N-acetyl-alpha-D-muramoyl-L-alanyl-D-glutamyl-meso-2,6-diaminopimeloyl-D-alanyl-D-alanine + UMP. It participates in cell wall biogenesis; peptidoglycan biosynthesis. Catalyzes the initial step of the lipid cycle reactions in the biosynthesis of the cell wall peptidoglycan: transfers peptidoglycan precursor phospho-MurNAc-pentapeptide from UDP-MurNAc-pentapeptide onto the lipid carrier undecaprenyl phosphate, yielding undecaprenyl-pyrophosphoryl-MurNAc-pentapeptide, known as lipid I. This Ruegeria sp. (strain TM1040) (Silicibacter sp.) protein is Phospho-N-acetylmuramoyl-pentapeptide-transferase.